Reading from the N-terminus, the 354-residue chain is Uroporphyrinogen decarboxylase (354 aa).

Substrate-binding positions include 27–31 (RQAGR), Asp-77, Tyr-154, Ser-209, and His-327.

Belongs to the uroporphyrinogen decarboxylase family. As to quaternary structure, homodimer.

The protein resides in the cytoplasm. The catalysed reaction is uroporphyrinogen III + 4 H(+) = coproporphyrinogen III + 4 CO2. The protein operates within porphyrin-containing compound metabolism; protoporphyrin-IX biosynthesis; coproporphyrinogen-III from 5-aminolevulinate: step 4/4. Its function is as follows. Catalyzes the decarboxylation of four acetate groups of uroporphyrinogen-III to yield coproporphyrinogen-III. The sequence is that of Uroporphyrinogen decarboxylase from Pseudoalteromonas translucida (strain TAC 125).